The sequence spans 496 residues: Probable fatty acyl-CoA reductase 5 (496 aa).

It belongs to the fatty acyl-CoA reductase family. In terms of tissue distribution, expressed in the endodermal cell layer surrounding the central vasculature in roots. Expressed in floral organs of very young unopened buds and receptacle of siliques.

The enzyme catalyses a long-chain fatty acyl-CoA + 2 NADPH + 2 H(+) = a long-chain primary fatty alcohol + 2 NADP(+) + CoA. Its function is as follows. Catalyzes the reduction of fatty acyl-CoA to fatty alcohols. Catalyzes specifically the formation of C18:0 fatty alcohol. Provides the fatty alcohols required for synthesis of suberin in roots, seed coat and wound-induced leaf tissue. Provides the fatty alcohols required for synthesis of alkyl hydroxycinnamates in root waxes. The sequence is that of Probable fatty acyl-CoA reductase 5 from Arabidopsis thaliana (Mouse-ear cress).